The chain runs to 272 residues: HMP-PP phosphatase (272 aa).

The Nucleophile role is filled by Asp-8. Mg(2+) contacts are provided by Asp-8, Asp-10, and Asp-212.

It belongs to the HAD-like hydrolase superfamily. Cof family. Mg(2+) is required as a cofactor.

It catalyses the reaction 4-amino-2-methyl-5-(diphosphooxymethyl)pyrimidine + H2O = 4-amino-2-methyl-5-(phosphooxymethyl)pyrimidine + phosphate + H(+). Catalyzes the hydrolysis of 4-amino-2-methyl-5-hydroxymethylpyrimidine pyrophosphate (HMP-PP) to 4-amino-2-methyl-5-hydroxymethylpyrimidine phosphate (HMP-P). This Escherichia coli O157:H7 protein is HMP-PP phosphatase.